Here is a 159-residue protein sequence, read N- to C-terminus: MANVVEALVSGGKATAGPPLGPALGPLGVNVAAVVAKINELTKDLNGMQVPVKIIVKSRTEFEIEVGTPPTSALLLKEAGVEKGSGDKKNFVGDISMDQVIKVAEIKRKNLLSSNLKSAVSEIVGTCGTLGIKIDGLTSKEVQKALASGSYDHLFEAKS.

This sequence belongs to the universal ribosomal protein uL11 family. As to quaternary structure, part of the ribosomal stalk of the 50S ribosomal subunit. Interacts with L10 and the large rRNA to form the base of the stalk. L10 forms an elongated spine to which L12 dimers bind in a sequential fashion forming a multimeric L10(L12)X complex.

Functionally, forms part of the ribosomal stalk which helps the ribosome interact with GTP-bound translation factors. The polypeptide is Large ribosomal subunit protein uL11 (Methanothrix thermoacetophila (strain DSM 6194 / JCM 14653 / NBRC 101360 / PT) (Methanosaeta thermophila)).